The chain runs to 124 residues: Small ribosomal subunit protein uS12 (124 aa).

At D89 the chain carries 3-methylthioaspartic acid.

It belongs to the universal ribosomal protein uS12 family. In terms of assembly, part of the 30S ribosomal subunit. Contacts proteins S8 and S17. May interact with IF1 in the 30S initiation complex.

With S4 and S5 plays an important role in translational accuracy. Its function is as follows. Interacts with and stabilizes bases of the 16S rRNA that are involved in tRNA selection in the A site and with the mRNA backbone. Located at the interface of the 30S and 50S subunits, it traverses the body of the 30S subunit contacting proteins on the other side and probably holding the rRNA structure together. The combined cluster of proteins S8, S12 and S17 appears to hold together the shoulder and platform of the 30S subunit. The polypeptide is Small ribosomal subunit protein uS12 (Sodalis glossinidius (strain morsitans)).